The following is a 273-amino-acid chain: Aquaporin NIP1-4 (273 aa).

Transmembrane regions (helical) follow at residues 59–79 (LLAEFLATFFLMFAGLGAITV) and 86–106 (VTFPGVAVAWGAAVMAMVYAV). The NPA 1 signature appears at 115 to 117 (NPA). 3 consecutive transmembrane segments (helical) span residues 133–155 (APAYALAQTAAATAASVVLRLMF), 174–194 (SLVIEFVITFYLMFVIMAVAT), and 198–218 (AVGHMAGVAVGGTIMLNVLFA). The short motif at 227 to 229 (NPA) is the NPA 2 element. A helical membrane pass occupies residues 245 to 265 (WVYILGPFAGAAAGAWAYSLI).

This sequence belongs to the MIP/aquaporin (TC 1.A.8) family. NIP (TC 1.A.8.12) subfamily. As to expression, expressed in leaves.

The protein resides in the membrane. Its function is as follows. Aquaporins facilitate the transport of water and small neutral solutes across cell membranes. The polypeptide is Aquaporin NIP1-4 (NIP1-4) (Oryza sativa subsp. japonica (Rice)).